A 2324-amino-acid polypeptide reads, in one-letter code: Acetyl-CoA carboxylase (2324 aa).

At M1 the chain carries N-acetylmethionine. Positions 1-34 (MEESSQPAKPLEMNPHSRFIIGSVSEDNSEDETS) are disordered. Phosphoserine is present on residues S78 and S80. The region spanning 117–618 (VIEKVLIANN…DTGWLDRLIA (502 aa)) is the Biotin carboxylation domain. The region spanning 275–466 (QKRILNVPQE…LPAAQLQIAM (192 aa)) is the ATP-grasp domain. 315 to 320 (GGGGKG) serves as a coordination point for ATP. Residues E424, E437, and N439 each coordinate Mn(2+). The active site involves R441. Residues 745 to 819 (FEKENDPSIL…DPGCVIAKLQ (75 aa)) enclose the Biotinyl-binding domain. The residue at position 786 (K786) is an N6-biotinyllysine. S1193 carries the post-translational modification Phosphoserine. Residues 1553 to 1891 (PYVTKDLLQS…SVYSPVPILK (339 aa)) enclose the CoA carboxyltransferase N-terminal domain. The segment at 1553-2211 (PYVTKDLLQS…EDVVKKKIHD (659 aa)) is carboxyltransferase. 3 residues coordinate CoA: R1800, K2104, and R2106. The CoA carboxyltransferase C-terminal domain occupies 1895–2211 (PIDRTIDFVP…EDVVKKKIHD (317 aa)).

Requires biotin as cofactor. The cofactor is Mn(2+).

Its subcellular location is the cytoplasm. It carries out the reaction hydrogencarbonate + acetyl-CoA + ATP = malonyl-CoA + ADP + phosphate + H(+). It catalyses the reaction N(6)-biotinyl-L-lysyl-[protein] + hydrogencarbonate + ATP = N(6)-carboxybiotinyl-L-lysyl-[protein] + ADP + phosphate + H(+). The protein operates within lipid metabolism; malonyl-CoA biosynthesis; malonyl-CoA from acetyl-CoA: step 1/1. With respect to regulation, by phosphorylation. Functionally, catalyzes the rate-limiting reaction in the biogenesis of long-chain fatty acids. Carries out three functions: biotin carboxyl carrier protein, biotin carboxylase and carboxyltransferase. The sequence is that of Acetyl-CoA carboxylase (ACAC) from Gallus gallus (Chicken).